The primary structure comprises 94 residues: Integration host factor subunit beta (94 aa).

Belongs to the bacterial histone-like protein family. As to quaternary structure, heterodimer of an alpha and a beta chain.

Functionally, this protein is one of the two subunits of integration host factor, a specific DNA-binding protein that functions in genetic recombination as well as in transcriptional and translational control. The sequence is that of Integration host factor subunit beta from Escherichia coli (strain UTI89 / UPEC).